A 228-amino-acid polypeptide reads, in one-letter code: Cytochrome c oxidase subunit 2 (228 aa).

Residues Met-1 to His-26 are Mitochondrial intermembrane-facing. Residues Thr-27–Asn-48 form a helical membrane-spanning segment. The Mitochondrial matrix portion of the chain corresponds to Lys-49–Glu-62. A helical transmembrane segment spans residues Leu-63–Arg-82. Over Leu-83–Ser-228 the chain is Mitochondrial intermembrane. Cu cation-binding residues include His-161, Cys-196, Glu-198, Cys-200, His-204, and Met-207. Glu-198 contacts Mg(2+).

It belongs to the cytochrome c oxidase subunit 2 family. Component of the cytochrome c oxidase (complex IV, CIV), a multisubunit enzyme composed of a catalytic core of 3 subunits and several supernumerary subunits. The complex exists as a monomer or a dimer and forms supercomplexes (SCs) in the inner mitochondrial membrane with ubiquinol-cytochrome c oxidoreductase (cytochrome b-c1 complex, complex III, CIII). The cofactor is Cu cation.

Its subcellular location is the mitochondrion inner membrane. It catalyses the reaction 4 Fe(II)-[cytochrome c] + O2 + 8 H(+)(in) = 4 Fe(III)-[cytochrome c] + 2 H2O + 4 H(+)(out). Functionally, component of the cytochrome c oxidase, the last enzyme in the mitochondrial electron transport chain which drives oxidative phosphorylation. The respiratory chain contains 3 multisubunit complexes succinate dehydrogenase (complex II, CII), ubiquinol-cytochrome c oxidoreductase (cytochrome b-c1 complex, complex III, CIII) and cytochrome c oxidase (complex IV, CIV), that cooperate to transfer electrons derived from NADH and succinate to molecular oxygen, creating an electrochemical gradient over the inner membrane that drives transmembrane transport and the ATP synthase. Cytochrome c oxidase is the component of the respiratory chain that catalyzes the reduction of oxygen to water. Electrons originating from reduced cytochrome c in the intermembrane space (IMS) are transferred via the dinuclear copper A center (CU(A)) of subunit 2 and heme A of subunit 1 to the active site in subunit 1, a binuclear center (BNC) formed by heme A3 and copper B (CU(B)). The BNC reduces molecular oxygen to 2 water molecules using 4 electrons from cytochrome c in the IMS and 4 protons from the mitochondrial matrix. This Yponomeuta malinellus (European small ermine moth) protein is Cytochrome c oxidase subunit 2 (COII).